The following is a 282-amino-acid chain: Pantothenate synthetase (282 aa).

30 to 37 (MGALHAGH) contacts ATP. The Proton donor role is filled by histidine 37. Position 61 (glutamine 61) interacts with (R)-pantoate. Beta-alanine is bound at residue glutamine 61. Residue 147–150 (GEKD) participates in ATP binding. (R)-pantoate is bound at residue glutamine 153. ATP-binding positions include valine 177 and 185-188 (LSSR).

This sequence belongs to the pantothenate synthetase family. In terms of assembly, homodimer.

The protein resides in the cytoplasm. It carries out the reaction (R)-pantoate + beta-alanine + ATP = (R)-pantothenate + AMP + diphosphate + H(+). It functions in the pathway cofactor biosynthesis; (R)-pantothenate biosynthesis; (R)-pantothenate from (R)-pantoate and beta-alanine: step 1/1. In terms of biological role, catalyzes the condensation of pantoate with beta-alanine in an ATP-dependent reaction via a pantoyl-adenylate intermediate. The polypeptide is Pantothenate synthetase (Phocaeicola vulgatus (strain ATCC 8482 / DSM 1447 / JCM 5826 / CCUG 4940 / NBRC 14291 / NCTC 11154) (Bacteroides vulgatus)).